A 493-amino-acid polypeptide reads, in one-letter code: CBL-interacting protein kinase 26 (493 aa).

The region spanning 12–266 (YEIGRQLGQG…IPKIKRSAWY (255 aa)) is the Protein kinase domain. Residues 18 to 26 (LGQGNFAKV) and lysine 41 each bind ATP. The active-site Proton acceptor is the aspartate 134. The interval 152–181 (DFGLSALSESKRHDGLLHTTCGTPAYVAPE) is activation loop. The disordered stretch occupies residues 311–332 (KVYTNGEATTSDSPECSNSDGK). Residues 316-332 (GEATTSDSPECSNSDGK) show a composition bias toward polar residues. The region spanning 320–360 (TSDSPECSNSDGKQASLSLPNLNAFDIISLSTGFDLSNLFE) is the NAF domain. Residues 365-394 (RREERFTTRQPAAAIFAKLNELARRFKLKI) are PPI. The disordered stretch occupies residues 465–493 (GQHQQPEQSMQGMQGEQQPSRLPSQQPQG).

Belongs to the protein kinase superfamily. CAMK Ser/Thr protein kinase family. SNF1 subfamily. The cofactor is Mn(2+).

It carries out the reaction L-seryl-[protein] + ATP = O-phospho-L-seryl-[protein] + ADP + H(+). It catalyses the reaction L-threonyl-[protein] + ATP = O-phospho-L-threonyl-[protein] + ADP + H(+). Its function is as follows. CIPK serine-threonine protein kinases interact with CBL proteins. Binding of a CBL protein to the regulatory NAF domain of CIPK protein lead to the activation of the kinase in a calcium-dependent manner. In Oryza sativa subsp. japonica (Rice), this protein is CBL-interacting protein kinase 26 (CIPK26).